We begin with the raw amino-acid sequence, 115 residues long: Ribonuclease P protein component (115 aa).

Belongs to the RnpA family. As to quaternary structure, consists of a catalytic RNA component (M1 or rnpB) and a protein subunit.

It carries out the reaction Endonucleolytic cleavage of RNA, removing 5'-extranucleotides from tRNA precursor.. In terms of biological role, RNaseP catalyzes the removal of the 5'-leader sequence from pre-tRNA to produce the mature 5'-terminus. It can also cleave other RNA substrates such as 4.5S RNA. The protein component plays an auxiliary but essential role in vivo by binding to the 5'-leader sequence and broadening the substrate specificity of the ribozyme. This chain is Ribonuclease P protein component, found in Staphylococcus carnosus (strain TM300).